The primary structure comprises 487 residues: N-succinylglutamate 5-semialdehyde dehydrogenase (487 aa).

221–226 lines the NAD(+) pocket; it reads GSSDTG. Catalysis depends on residues E244 and C278.

It belongs to the aldehyde dehydrogenase family. AstD subfamily.

The enzyme catalyses N-succinyl-L-glutamate 5-semialdehyde + NAD(+) + H2O = N-succinyl-L-glutamate + NADH + 2 H(+). The protein operates within amino-acid degradation; L-arginine degradation via AST pathway; L-glutamate and succinate from L-arginine: step 4/5. Functionally, catalyzes the NAD-dependent reduction of succinylglutamate semialdehyde into succinylglutamate. This is N-succinylglutamate 5-semialdehyde dehydrogenase from Burkholderia thailandensis (strain ATCC 700388 / DSM 13276 / CCUG 48851 / CIP 106301 / E264).